The sequence spans 238 residues: MGRKWANIVAKKTAKDGATSKIYAKFGVEIYAAAKQGEPDPELNTSLKFVIERAKQAQVPKHVIDKAIDKAKGGGDETFVQGRYEGFGPNGSMIIAETLTSNVNRTIANVRTIFNKKGGNIGAAGSVSYMFDNAGVIVFKGSDPDHIFEILLEAEVDVRDVTEEEGNIVIYTEPTDLHKGIAALKAAGITEFSTTELEMIAQSEVELSPEDLEIFEGLVDALEDDDDVQKVYHNVANL.

It belongs to the TACO1 family. YeeN subfamily.

Its subcellular location is the cytoplasm. The protein is Probable transcriptional regulatory protein YeeN of Shigella sonnei (strain Ss046).